Reading from the N-terminus, the 434-residue chain is Adenylosuccinate synthetase (434 aa).

GTP contacts are provided by residues 22 to 28 and 50 to 52; these read GDEGKGK and GHT. Residue D23 is the Proton acceptor of the active site. D23 and G50 together coordinate Mg(2+). IMP is bound by residues 23–26, 48–51, T139, R153, Q234, T249, and R313; these read DEGK and NAGH. H51 acts as the Proton donor in catalysis. Substrate is bound at residue 309–315; the sequence is ATTGRKR. GTP contacts are provided by residues R315, 341–343, and 423–425; these read KLD and SVG.

Belongs to the adenylosuccinate synthetase family. As to quaternary structure, homodimer. The cofactor is Mg(2+).

Its subcellular location is the cytoplasm. The enzyme catalyses IMP + L-aspartate + GTP = N(6)-(1,2-dicarboxyethyl)-AMP + GDP + phosphate + 2 H(+). It participates in purine metabolism; AMP biosynthesis via de novo pathway; AMP from IMP: step 1/2. Plays an important role in the de novo pathway of purine nucleotide biosynthesis. Catalyzes the first committed step in the biosynthesis of AMP from IMP. This is Adenylosuccinate synthetase from Chlorobium luteolum (strain DSM 273 / BCRC 81028 / 2530) (Pelodictyon luteolum).